A 469-amino-acid polypeptide reads, in one-letter code: UDP-N-acetylmuramate--L-alanine ligase (469 aa).

Gly122–Thr128 lines the ATP pocket.

It belongs to the MurCDEF family.

The protein resides in the cytoplasm. The catalysed reaction is UDP-N-acetyl-alpha-D-muramate + L-alanine + ATP = UDP-N-acetyl-alpha-D-muramoyl-L-alanine + ADP + phosphate + H(+). It functions in the pathway cell wall biogenesis; peptidoglycan biosynthesis. Cell wall formation. This chain is UDP-N-acetylmuramate--L-alanine ligase, found in Legionella pneumophila (strain Paris).